The chain runs to 199 residues: MESGGPTYRIENIVATVNLGVELDLEKLAERLAMAEYNPDQFPGLILRLTKPRISALIFRTGKMVCTGAKNEEDLKNAVRALVKLLRDHGAEVPFDPEVQVQNIVASGNLHAEVDLEQAVLMLENAMYEPEQFPGLIYRMSSPRVVMLIFGSGKIVCTGAKSERDVATAVQKLYNQLKDLGVLYIEEGGGEEEEELEEL.

Repeat copies occupy residues 10–86 (IENI…VKLL) and 101–177 (VQNI…YNQL).

This sequence belongs to the TBP family.

General factor that plays a role in the activation of archaeal genes transcribed by RNA polymerase. Binds specifically to the TATA box promoter element which lies close to the position of transcription initiation. The polypeptide is TATA-box-binding protein (Pyrobaculum islandicum (strain DSM 4184 / JCM 9189 / GEO3)).